We begin with the raw amino-acid sequence, 348 residues long: Phenylalanine--tRNA ligase alpha subunit (348 aa).

Residue Glu-259 participates in Mg(2+) binding.

This sequence belongs to the class-II aminoacyl-tRNA synthetase family. Phe-tRNA synthetase alpha subunit type 1 subfamily. In terms of assembly, tetramer of two alpha and two beta subunits. Mg(2+) serves as cofactor.

It is found in the cytoplasm. It carries out the reaction tRNA(Phe) + L-phenylalanine + ATP = L-phenylalanyl-tRNA(Phe) + AMP + diphosphate + H(+). In Enterococcus faecalis (strain ATCC 700802 / V583), this protein is Phenylalanine--tRNA ligase alpha subunit.